The primary structure comprises 694 residues: Probable methyltransferase PMT11 (694 aa).

Topologically, residues 1–14 (MKPLTNGDLFKSPT) are cytoplasmic. The helical; Signal-anchor for type II membrane protein transmembrane segment at 15-32 (LIKISALVFVTVAFFYLG) threads the bilayer. Residues 33–694 (KHWSDDGYQQ…LTCEKRLLRA (662 aa)) are Lumenal-facing. Residues N69 and N77 are each glycosylated (N-linked (GlcNAc...) asparagine). The segment at 83–128 (IPATIRQQPPSVVADTEKVKVEANPPPPPPPSPSPPPPPGPVKSFG) is disordered. The segment covering 106 to 123 (NPPPPPPPSPSPPPPPGP) has biased composition (pro residues). N-linked (GlcNAc...) asparagine glycans are attached at residues N155, N378, and N423.

Belongs to the methyltransferase superfamily.

It localises to the golgi apparatus membrane. The sequence is that of Probable methyltransferase PMT11 from Arabidopsis thaliana (Mouse-ear cress).